A 53-amino-acid chain; its full sequence is Large ribosomal subunit protein bL33 (53 aa).

Belongs to the bacterial ribosomal protein bL33 family.

This chain is Large ribosomal subunit protein bL33, found in Blochmanniella floridana.